Here is a 197-residue protein sequence, read N- to C-terminus: Putative glutathione-dependent formaldehyde-activating enzyme (197 aa).

A CENP-V/GFA domain is found at 22-171; it reads FPGGKLYCHC…LKSLGLENYD (150 aa). The Zn(2+) site is built by C29, C31, C50, C52, C55, C97, and C100.

Belongs to the Gfa family. It depends on Zn(2+) as a cofactor.

The enzyme catalyses S-(hydroxymethyl)glutathione = glutathione + formaldehyde. The protein operates within one-carbon metabolism; formaldehyde degradation; formate from formaldehyde (glutathione route): step 1/3. Functionally, catalyzes the condensation of formaldehyde and glutathione to S-hydroxymethylglutathione. This is Putative glutathione-dependent formaldehyde-activating enzyme from Emericella nidulans (strain FGSC A4 / ATCC 38163 / CBS 112.46 / NRRL 194 / M139) (Aspergillus nidulans).